A 128-amino-acid chain; its full sequence is Small ribosomal subunit protein eS8 (128 aa).

This sequence belongs to the eukaryotic ribosomal protein eS8 family. Part of the 30S ribosomal subunit.

This chain is Small ribosomal subunit protein eS8, found in Methanococcus maripaludis (strain C5 / ATCC BAA-1333).